The chain runs to 566 residues: MTKKLTPQEKKNRKPAVRACVFCHQKHLQCSNERPCKNCVKRNIAHGCQDIVRKRVKYLTGEGVPGAVSNKQSTPRKKLKTSPVSTSVSPMDSVKSELATPVESSNHFPPPMSSSVDALPTTQHSAIEIPPNDQPISDILEVPPLFDSSHMISSEAPETNITLTTQNLITPDPLSFHTNTVSNTTTDVLNKLLNDNYETESILSANNSNGDHLLGMAHTSSGHLSNGQQFQSNYLNEEYMMLGDIILQSKQASPSPSNTSTSENNTNTLSPSSFGYISNINFEDFNQPKRKVVQKLKDSRPFISLGFTADLAPHDNNNNTDYYDDKMTNNITGKTEEGPGNPIINYNTKFTTDYVPPSITNNLYKTASDLYSKELKNFYYPLSYHALTKLLKVIFGGNDLSPEEKQEKRSKLLIILKLIASYRPTFIAAHRDLIQEDLLMLEMTLQRSLLDYKKLAELNSSPTIMWRRTGEIISITEDMALLLEHSSFDLLKERRFIFELMDDNSIVDYFNLFANIAVGNLKSVIQTAIQMKTKSSNLIKFTCVFTIKRDIFDIPMIVIGQFLPIV.

Residues Cys20–Cys48 constitute a DNA-binding region (zn(2)-C6 fungal-type). Disordered regions lie at residues Gly63 to Asp92 and Lys250 to Ser270. A compositionally biased stretch (low complexity) spans Ser253 to Ser270.

This sequence belongs to the ERT1/acuK family.

The protein localises to the nucleus. Functionally, transcription factor which regulates nonfermentable carbon utilization. This Candida albicans (strain WO-1) (Yeast) protein is Glucose starvation modulator protein 1 (GSM1).